Consider the following 741-residue polypeptide: DDVALYFSGQEWEILEKWQKQMYKQEMKTNYQTLDSLGYAFSKPDLITWMEQGRMLFISEQGCLDKTRRTTSPPTDEQLDMKDTGKLPCFDHEGTLRTKEEDCRLNGPQKQDLGAALPGKERKILSARRDTFQSPSLQETEIPNKKVSITASDPDKKDLRHKPRETPGRLEIPTGPRCYSCYVCRKVFQVRRDLLKHKRSHSKSQLRRYPKYRNTSRGKSELRRTQRLLCQKKRFQCSECEKSYFLKGSLVTHQVVHTGQRPYPCPECDKTFRYRANLKKHLCLHRGERPFCCGECGRAFVQQCELTEHLRLHSGEKPFQCPQCDRCFRLKRGMKVHLSQHSGKRPFHCPECGRSFSRKAALKTHQRTHSEEKPFSCDECGRKFIYKIKLDEHIRVHTGEKPFSCPECNKSFRLKRSLKAHGLQHSGKRPFQCPECSRGFFWRNAMRAHQRLHSEQKPFPCAECGKRFTRPSKLACHTRVHDRQKEFPCGECKKTFSQQSRLTQHLKVHNTEKPFSCAECGRSFRRRAHLTEHTRLHSGEEPFQCPECDKSFSWKASMKFHQRMHRDEKPFACSECGKTYTHQSQLTEHLRLHSGEKPYQCPECQKTFRLKGNLKSHLLQHSGQKPFSCVMCGKSFTQQYRLTEHIRVHSGEKPFQCPECDKSYCIRGSLKVHLYTHSGERPFQCPECGKGFLQKRSLKAHLCLHSGERPFSCDECGRSFTYVGALKTHIAVHAKEKPSSL.

Positions aspartate 1–arginine 69 constitute a KRAB domain. Disordered regions lie at residues threonine 67 to lysine 86 and arginine 128 to arginine 169. Polar residues predominate over residues phenylalanine 132–alanine 151. Positions aspartate 153 to glycine 168 are enriched in basic and acidic residues. 19 consecutive C2H2-type zinc fingers follow at residues tyrosine 179–histidine 201, phenylalanine 235–histidine 257, tyrosine 263–histidine 285, phenylalanine 291–histidine 313, phenylalanine 319–histidine 341, phenylalanine 347–histidine 369, phenylalanine 375–histidine 397, phenylalanine 403–histidine 425, phenylalanine 431–histidine 453, phenylalanine 459–histidine 481, phenylalanine 487–histidine 509, phenylalanine 515–histidine 537, phenylalanine 543–histidine 565, phenylalanine 571–histidine 593, tyrosine 599–histidine 621, phenylalanine 627–histidine 649, phenylalanine 655–histidine 677, phenylalanine 683–histidine 705, and phenylalanine 711–histidine 733.

It belongs to the krueppel C2H2-type zinc-finger protein family.

The protein localises to the nucleus. Its subcellular location is the cytoplasm. Acts as a transcriptional repressor. The polypeptide is Zinc finger protein 425 (ZNF425) (Macaca fascicularis (Crab-eating macaque)).